We begin with the raw amino-acid sequence, 659 residues long: 1,4-alpha-glucan branching enzyme GlgB 2 (659 aa).

The tract at residues 1–26 is disordered; sequence MRNYKELKHEKNGNVTEKIGENKGKS. Catalysis depends on aspartate 337, which acts as the Nucleophile. The active-site Proton donor is the glutamate 390.

The protein belongs to the glycosyl hydrolase 13 family. GlgB subfamily. In terms of assembly, monomer.

The catalysed reaction is Transfers a segment of a (1-&gt;4)-alpha-D-glucan chain to a primary hydroxy group in a similar glucan chain.. It functions in the pathway glycan biosynthesis; glycogen biosynthesis. Functionally, catalyzes the formation of the alpha-1,6-glucosidic linkages in glycogen by scission of a 1,4-alpha-linked oligosaccharide from growing alpha-1,4-glucan chains and the subsequent attachment of the oligosaccharide to the alpha-1,6 position. The polypeptide is 1,4-alpha-glucan branching enzyme GlgB 2 (Clostridium perfringens (strain SM101 / Type A)).